Reading from the N-terminus, the 336-residue chain is tRNA dimethylallyltransferase (336 aa).

19-26 is an ATP binding site; the sequence is GPTASGKT. Position 21 to 26 (21 to 26) interacts with substrate; the sequence is TASGKT.

This sequence belongs to the IPP transferase family. As to quaternary structure, monomer. Requires Mg(2+) as cofactor.

It catalyses the reaction adenosine(37) in tRNA + dimethylallyl diphosphate = N(6)-dimethylallyladenosine(37) in tRNA + diphosphate. Its function is as follows. Catalyzes the transfer of a dimethylallyl group onto the adenine at position 37 in tRNAs that read codons beginning with uridine, leading to the formation of N6-(dimethylallyl)adenosine (i(6)A). This is tRNA dimethylallyltransferase from Bifidobacterium adolescentis (strain ATCC 15703 / DSM 20083 / NCTC 11814 / E194a).